Here is a 273-residue protein sequence, read N- to C-terminus: Light-independent protochlorophyllide reductase iron-sulfur ATP-binding protein (273 aa).

Residues 12-17 (GIGKST) and K41 contribute to the ATP site. Residue S16 coordinates Mg(2+). [4Fe-4S] cluster-binding residues include C97 and C131. 182–183 (NR) lines the ATP pocket.

The protein belongs to the NifH/BchL/ChlL family. In terms of assembly, homodimer. Protochlorophyllide reductase is composed of three subunits; BchL, BchN and BchB. The cofactor is [4Fe-4S] cluster.

The enzyme catalyses chlorophyllide a + oxidized 2[4Fe-4S]-[ferredoxin] + 2 ADP + 2 phosphate = protochlorophyllide a + reduced 2[4Fe-4S]-[ferredoxin] + 2 ATP + 2 H2O. It participates in porphyrin-containing compound metabolism; bacteriochlorophyll biosynthesis (light-independent). Component of the dark-operative protochlorophyllide reductase (DPOR) that uses Mg-ATP and reduced ferredoxin to reduce ring D of protochlorophyllide (Pchlide) to form chlorophyllide a (Chlide). This reaction is light-independent. The L component serves as a unique electron donor to the NB-component of the complex, and binds Mg-ATP. The sequence is that of Light-independent protochlorophyllide reductase iron-sulfur ATP-binding protein from Roseiflexus castenholzii (strain DSM 13941 / HLO8).